Here is a 261-residue protein sequence, read N- to C-terminus: Proliferating cell nuclear antigen (261 aa).

A DNA-binding region spans residues 61–80; the sequence is RCDRNQSIGVKMSSMSKILK. Lys-164 participates in a covalent cross-link: Glycyl lysine isopeptide (Lys-Gly) (interchain with G-Cter in ubiquitin).

This sequence belongs to the PCNA family. In terms of assembly, homotrimer. Forms a complex with activator 1 heteropentamer in the presence of ATP. Component of the replisome complex. Interacts with apex2.L (via PIP box and GRF-type Zinc finger domain); the interaction is required for 3'-5' single-strand break (SSB) end resection, assembly of a checkpoint protein complex to SSB sites, and SSB signaling. Post-translationally, monoubiquitinated by the ube2b-rad18 complex on Lys-164. Monoubiquitination at Lys-164 also takes place in undamaged proliferating cells, and is mediated by the dcx(dtl) complex, leading to enhance PCNA-dependent translesion DNA synthesis.

Its subcellular location is the nucleus. In terms of biological role, this protein is an auxiliary protein of DNA polymerase delta and is involved in the control of eukaryotic DNA replication by increasing the polymerase's processibility during elongation of the leading strand. Promotes 3'-5' nuclease activity of the DNA-endonuclease apex2.L in response to DNA damage. This is Proliferating cell nuclear antigen (pcna) from Xenopus laevis (African clawed frog).